Reading from the N-terminus, the 954-residue chain is Glycine dehydrogenase (decarboxylating) (954 aa).

Residue Lys704 is modified to N6-(pyridoxal phosphate)lysine.

It belongs to the GcvP family. The glycine cleavage system is composed of four proteins: P, T, L and H. Requires pyridoxal 5'-phosphate as cofactor.

The enzyme catalyses N(6)-[(R)-lipoyl]-L-lysyl-[glycine-cleavage complex H protein] + glycine + H(+) = N(6)-[(R)-S(8)-aminomethyldihydrolipoyl]-L-lysyl-[glycine-cleavage complex H protein] + CO2. The glycine cleavage system catalyzes the degradation of glycine. The P protein binds the alpha-amino group of glycine through its pyridoxal phosphate cofactor; CO(2) is released and the remaining methylamine moiety is then transferred to the lipoamide cofactor of the H protein. This is Glycine dehydrogenase (decarboxylating) from Rhizobium leguminosarum bv. trifolii (strain WSM2304).